The primary structure comprises 554 residues: Valerianol synthase TPS1B (554 aa).

Mg(2+)-binding residues include Asp307 and Asp311. The short motif at 326–330 is the DDXXD motif element; it reads VQRWD. Residues Asp452, Ser456, and Glu460 each contribute to the Mg(2+) site.

The protein belongs to the terpene synthase family. The cofactor is Mg(2+).

It catalyses the reaction (2E,6E)-farnesyl diphosphate + H2O = valerianol + diphosphate. It participates in secondary metabolite biosynthesis; terpenoid biosynthesis. Its function is as follows. Terpene synthase that catalyzes the biosynthesis of the terpene valerianol, which is a volatile compound of floral scent. The chain is Valerianol synthase TPS1B from Camellia hiemalis (Camellia).